Consider the following 150-residue polypeptide: Ribonuclease H (150 aa).

Positions 7–148 (ERPRVEIWTD…VDQLATRGRE (142 aa)) constitute an RNase H type-1 domain. Residues Asp-16, Glu-54, Asp-76, and Asp-140 each coordinate Mg(2+).

The protein belongs to the RNase H family. In terms of assembly, monomer. Requires Mg(2+) as cofactor.

It is found in the cytoplasm. The enzyme catalyses Endonucleolytic cleavage to 5'-phosphomonoester.. In terms of biological role, endonuclease that specifically degrades the RNA of RNA-DNA hybrids. The sequence is that of Ribonuclease H from Gluconobacter oxydans (strain 621H) (Gluconobacter suboxydans).